The primary structure comprises 226 residues: Ribonuclease 3 (226 aa).

One can recognise an RNase III domain in the interval Lys-7–Gly-134. Glu-47 serves as a coordination point for Mg(2+). Asp-51 is an active-site residue. Positions 120 and 123 each coordinate Mg(2+). Glu-123 is an active-site residue. The region spanning Asp-160 to Lys-226 is the DRBM domain. Residues Lys-201–Lys-226 form a disordered region. Low complexity predominate over residues Glu-214–Lys-226.

It belongs to the ribonuclease III family. As to quaternary structure, homodimer. The cofactor is Mg(2+).

It is found in the cytoplasm. The enzyme catalyses Endonucleolytic cleavage to 5'-phosphomonoester.. Functionally, digests double-stranded RNA. Involved in the processing of primary rRNA transcript to yield the immediate precursors to the large and small rRNAs (23S and 16S). Processes some mRNAs, and tRNAs when they are encoded in the rRNA operon. Processes pre-crRNA and tracrRNA of type II CRISPR loci if present in the organism. The sequence is that of Ribonuclease 3 from Lactobacillus johnsonii (strain CNCM I-12250 / La1 / NCC 533).